The chain runs to 231 residues: Flagellar L-ring protein (231 aa).

The first 18 residues, Met1 to Gly18, serve as a signal peptide directing secretion. Residue Cys19 is the site of N-palmitoyl cysteine attachment. Cys19 carries the S-diacylglycerol cysteine lipid modification.

It belongs to the FlgH family. In terms of assembly, the basal body constitutes a major portion of the flagellar organelle and consists of four rings (L,P,S, and M) mounted on a central rod.

The protein resides in the cell outer membrane. It is found in the bacterial flagellum basal body. Functionally, assembles around the rod to form the L-ring and probably protects the motor/basal body from shearing forces during rotation. The sequence is that of Flagellar L-ring protein from Pseudomonas fluorescens (strain ATCC BAA-477 / NRRL B-23932 / Pf-5).